Consider the following 153-residue polypeptide: Riboflavin synthase (153 aa).

The protein belongs to the DMRL synthase family. Homooligomer. Mg(2+) is required as a cofactor.

It carries out the reaction 2 6,7-dimethyl-8-(1-D-ribityl)lumazine + H(+) = 5-amino-6-(D-ribitylamino)uracil + riboflavin. It functions in the pathway cofactor biosynthesis; riboflavin biosynthesis; riboflavin from 2-hydroxy-3-oxobutyl phosphate and 5-amino-6-(D-ribitylamino)uracil: step 2/2. With respect to regulation, inhibited by EDTA. This is Riboflavin synthase (ribC) from Methanothermobacter thermautotrophicus (strain ATCC 29096 / DSM 1053 / JCM 10044 / NBRC 100330 / Delta H) (Methanobacterium thermoautotrophicum).